A 615-amino-acid chain; its full sequence is DNA mismatch repair protein MutL (615 aa).

The interval 363–397 is disordered; it reads FAEPAAREPVAPRYTPAPASGSRPAAPWPNAQPGY. Over residues 364-391 the composition is skewed to low complexity; the sequence is AEPAAREPVAPRYTPAPASGSRPAAPWP.

This sequence belongs to the DNA mismatch repair MutL/HexB family.

Functionally, this protein is involved in the repair of mismatches in DNA. It is required for dam-dependent methyl-directed DNA mismatch repair. May act as a 'molecular matchmaker', a protein that promotes the formation of a stable complex between two or more DNA-binding proteins in an ATP-dependent manner without itself being part of a final effector complex. The protein is DNA mismatch repair protein MutL of Escherichia coli (strain ATCC 8739 / DSM 1576 / NBRC 3972 / NCIMB 8545 / WDCM 00012 / Crooks).